The chain runs to 394 residues: Protein DDI1 homolog 2 (394 aa).

The Ubiquitin-like domain maps to Met-1–Glu-81. Residues Ala-82–Asp-128 are disordered. The segment covering Pro-107–Asp-119 has biased composition (pro residues). Asp-247 is a catalytic residue. The Ubiquitin-binding signature appears at Glu-371–Asp-390.

This sequence belongs to the DDI1 family. Homodimer.

The protein localises to the cytoplasm. It localises to the cytosol. It is found in the chromosome. Aspartic protease that mediates the cleavage of NFE2L1/NRF1 at 'Leu-104', thereby promoting release of NFE2L1/NRF1 from the endoplasmic reticulum membrane. Ubiquitination of NFE2L1/NRF1 is a prerequisite for cleavage, suggesting that DDI2 specifically recognizes and binds ubiquitinated NFE2L1/NRF1. Seems to act as a proteasomal shuttle which links the proteasome and replication fork proteins like RTF2. Required for cellular survival following replication stress. The polypeptide is Protein DDI1 homolog 2 (ddi2) (Xenopus tropicalis (Western clawed frog)).